Reading from the N-terminus, the 228-residue chain is Translin (228 aa).

A DNA/RNA binding region spans residues 86-90 (RFHEH). The segment at 177–198 (LDSGFRLLNLKNDSLRKRYDGL) is leucine-zipper. N6-acetyllysine is present on Lys187. Ser190 is subject to Phosphoserine. Lys199 carries the post-translational modification N6-acetyllysine.

The protein belongs to the translin family. In terms of assembly, ring-shaped heterooctamer of six TSN and two TSNAX subunits, DNA/RNA binding occurs inside the ring.

The protein localises to the cytoplasm. Its subcellular location is the nucleus. Its function is as follows. DNA-binding protein that specifically recognizes consensus sequences at the breakpoint junctions in chromosomal translocations, mostly involving immunoglobulin (Ig)/T-cell receptor gene segments. Seems to recognize single-stranded DNA ends generated by staggered breaks occurring at recombination hot spots. In terms of biological role, exhibits both single-stranded and double-stranded endoribonuclease activity. May act as an activator of RNA-induced silencing complex (RISC) by facilitating endonucleolytic cleavage of the siRNA passenger strand. The polypeptide is Translin (TSN) (Bos taurus (Bovine)).